The sequence spans 248 residues: PF03932 family protein CutC (248 aa).

It belongs to the CutC family. As to quaternary structure, homodimer.

It is found in the cytoplasm. The protein is PF03932 family protein CutC of Escherichia coli O17:K52:H18 (strain UMN026 / ExPEC).